The primary structure comprises 225 residues: Two-component response regulator PhoP (225 aa).

The region spanning 2–116 (KLLVVEDEAL…ELEARLNALL (115 aa)) is the Response regulatory domain. D51 is subject to 4-aspartylphosphate. Residues 124 to 222 (QSTIEAGPLV…VRGQGYLFTE (99 aa)) constitute a DNA-binding region (ompR/PhoB-type).

Its function is as follows. Member of the two-component regulatory system PhoP/PhoQ that plays a role in the regulation of resistance towards polymyxin B and cationic antimicrobial peptides in response to limiting concentrations of Mg(2+). Functions as a transcriptional activator by direct binding to a cis-acting sequence upstream of the target gene promoters including oprH and pmrH promoters. This Pseudomonas aeruginosa (strain ATCC 15692 / DSM 22644 / CIP 104116 / JCM 14847 / LMG 12228 / 1C / PRS 101 / PAO1) protein is Two-component response regulator PhoP (phoP).